Consider the following 602-residue polypeptide: UvrABC system protein C (602 aa).

Positions 17–94 (KTSGCYKMYS…IKKYKPTYNI (78 aa)) constitute a GIY-YIG domain. Positions 199-234 (SKLLNDIEIKMKEVIMKENFEAAIKLKETKKSLIEI) constitute a UVR domain.

The protein belongs to the UvrC family. Interacts with UvrB in an incision complex.

It localises to the cytoplasm. Functionally, the UvrABC repair system catalyzes the recognition and processing of DNA lesions. UvrC both incises the 5' and 3' sides of the lesion. The N-terminal half is responsible for the 3' incision and the C-terminal half is responsible for the 5' incision. The chain is UvrABC system protein C from Borrelia duttonii (strain Ly).